The sequence spans 464 residues: Glutamate--tRNA ligase (464 aa).

The 'HIGH' region motif lies at 9–19; sequence PSPTGYLHIGG. The 'KMSKS' region motif lies at 242-246; that stretch reads KISKR. K245 serves as a coordination point for ATP.

The protein belongs to the class-I aminoacyl-tRNA synthetase family. Glutamate--tRNA ligase type 1 subfamily. In terms of assembly, monomer.

The protein resides in the cytoplasm. The enzyme catalyses tRNA(Glu) + L-glutamate + ATP = L-glutamyl-tRNA(Glu) + AMP + diphosphate. In terms of biological role, catalyzes the attachment of glutamate to tRNA(Glu) in a two-step reaction: glutamate is first activated by ATP to form Glu-AMP and then transferred to the acceptor end of tRNA(Glu). This is Glutamate--tRNA ligase from Neisseria gonorrhoeae (strain NCCP11945).